An 80-amino-acid chain; its full sequence is Defensin-like protein 14 (80 aa).

Positions 1–29 are cleaved as a signal peptide; sequence MAKSAAIITFLFAALVLFAAFEAPIMVEA. Residue Q30 is modified to Pyrrolidone carboxylic acid. 4 cysteine pairs are disulfide-bonded: C33/C80, C44/C65, C50/C74, and C54/C76.

Belongs to the DEFL family.

Its subcellular location is the secreted. Its function is as follows. Confers broad-spectrum resistance to pathogens. Has antifungal activity in vitro. This Arabidopsis thaliana (Mouse-ear cress) protein is Defensin-like protein 14 (PDF1.3).